The chain runs to 249 residues: tRNA pseudouridine synthase A (249 aa).

The active-site Nucleophile is aspartate 54. Tyrosine 112 is a binding site for substrate.

This sequence belongs to the tRNA pseudouridine synthase TruA family. In terms of assembly, homodimer.

The enzyme catalyses uridine(38/39/40) in tRNA = pseudouridine(38/39/40) in tRNA. Functionally, formation of pseudouridine at positions 38, 39 and 40 in the anticodon stem and loop of transfer RNAs. This chain is tRNA pseudouridine synthase A, found in Latilactobacillus sakei subsp. sakei (strain 23K) (Lactobacillus sakei subsp. sakei).